A 268-amino-acid chain; its full sequence is Chymotrypsin-C (268 aa).

Residues M1–C16 form the signal peptide. Residues C17–R29 constitute a propeptide, activation peptide. 5 disulfide bridges follow: C17–C141, C59–C75, C155–C222, C186–C202, and C212–C243. N-linked (GlcNAc...) asparagine glycosylation occurs at N25. A Peptidase S1 domain is found at V30–Q267. The active-site Charge relay system is the H74. The N-linked (GlcNAc...) asparagine glycan is linked to N90. The active-site Charge relay system is the D121. Catalysis depends on S216, which acts as the Charge relay system.

The protein belongs to the peptidase S1 family. Elastase subfamily. Pancreas.

It catalyses the reaction Preferential cleavage: Leu-|-Xaa, Tyr-|-Xaa, Phe-|-Xaa, Met-|-Xaa, Trp-|-Xaa, Gln-|-Xaa, Asn-|-Xaa.. Regulates activation and degradation of trypsinogens and procarboxypeptidases by targeting specific cleavage sites within their zymogen precursors. Has chymotrypsin-type protease activity and hypocalcemic activity. Cleaves TRY4 and TRY5 and thereby inhibits their autoactivation. The sequence is that of Chymotrypsin-C (Ctrc) from Rattus norvegicus (Rat).